Reading from the N-terminus, the 251-residue chain is Gamma-glutamyl peptidase 5 (251 aa).

The Glutamine amidotransferase type-1 domain occupies 17–214; the sequence is STFVKKAYGG…IDRVVNLKLM (198 aa). The active-site Nucleophile is C101. Catalysis depends on residues H193 and E195.

The protein belongs to the peptidase C26 family.

It is found in the cytoplasm. The protein localises to the cytosol. It functions in the pathway secondary metabolite biosynthesis. Involved in glucosinolate biosynthesis. Hydrolyzes the gamma-glutamyl peptide bond of several glutathione (GSH) conjugates to produce Cys-Gly conjugates related to glucosinolates. The gamma-Glu-Cys-Gly-GSH conjugates are the sulfur-donating molecule in glucosinolate biosynthesis. The polypeptide is Gamma-glutamyl peptidase 5 (Arabidopsis thaliana (Mouse-ear cress)).